Here is a 353-residue protein sequence, read N- to C-terminus: UDP-N-acetylglucosamine--N-acetylmuramyl-(pentapeptide) pyrophosphoryl-undecaprenol N-acetylglucosamine transferase (353 aa).

Residues 10-12, N124, S183, and Q283 contribute to the UDP-N-acetyl-alpha-D-glucosamine site; that span reads TGG.

Belongs to the glycosyltransferase 28 family. MurG subfamily.

It is found in the cell inner membrane. It carries out the reaction di-trans,octa-cis-undecaprenyl diphospho-N-acetyl-alpha-D-muramoyl-L-alanyl-D-glutamyl-meso-2,6-diaminopimeloyl-D-alanyl-D-alanine + UDP-N-acetyl-alpha-D-glucosamine = di-trans,octa-cis-undecaprenyl diphospho-[N-acetyl-alpha-D-glucosaminyl-(1-&gt;4)]-N-acetyl-alpha-D-muramoyl-L-alanyl-D-glutamyl-meso-2,6-diaminopimeloyl-D-alanyl-D-alanine + UDP + H(+). The protein operates within cell wall biogenesis; peptidoglycan biosynthesis. Cell wall formation. Catalyzes the transfer of a GlcNAc subunit on undecaprenyl-pyrophosphoryl-MurNAc-pentapeptide (lipid intermediate I) to form undecaprenyl-pyrophosphoryl-MurNAc-(pentapeptide)GlcNAc (lipid intermediate II). This chain is UDP-N-acetylglucosamine--N-acetylmuramyl-(pentapeptide) pyrophosphoryl-undecaprenol N-acetylglucosamine transferase, found in Helicobacter pylori (strain Shi470).